Here is a 426-residue protein sequence, read N- to C-terminus: Histidine--tRNA ligase (426 aa).

Belongs to the class-II aminoacyl-tRNA synthetase family. As to quaternary structure, homodimer.

The protein localises to the cytoplasm. The enzyme catalyses tRNA(His) + L-histidine + ATP = L-histidyl-tRNA(His) + AMP + diphosphate + H(+). This is Histidine--tRNA ligase from Streptococcus pyogenes serotype M5 (strain Manfredo).